Here is a 173-residue protein sequence, read N- to C-terminus: Large ribosomal subunit protein uL16 (173 aa).

The protein belongs to the universal ribosomal protein uL16 family.

This chain is Large ribosomal subunit protein uL16, found in Methanosarcina acetivorans (strain ATCC 35395 / DSM 2834 / JCM 12185 / C2A).